The sequence spans 150 residues: DNA-directed RNA polymerases I, II, and III subunit RPABC3 (150 aa).

The residue at position 2 (Ala2) is an N-acetylalanine.

The protein belongs to the eukaryotic RPB8 RNA polymerase subunit family. Component of the RNA polymerase I (Pol I), RNA polymerase II (Pol II) and RNA polymerase III (Pol III) complexes consisting of at least 13, 12 and 17 subunits, respectively. Pol I complex consists of a ten-subunit catalytic core composed of POLR1A/RPA1, POLR1B/RPA2, POLR1C/RPAC1, POLR1D/RPAC2, POLR1H/RPA12, POLR2E/RPABC1, POLR2F/RPABC2, POLR2H/RPABC3, POLR2K/RPABC4 and POLR2L/RPABC5; a mobile stalk subunit POLR1F/RPA43 protruding from the core and additional subunits homologous to general transcription factors POLR1E/RPA49 and POLR1G/RPA34. Part of Pol I pre-initiation complex (PIC), in which Pol I core assembles with RRN3 and promoter-bound UTBF and SL1/TIF-IB complex. Pol II complex contains a ten-subunit catalytic core composed of POLR2A/RPB1, POLR2B/RPB2, POLR2C/RPB3, POLR2I/RPB9, POLR2J/RPB11, POLR2E/RPABC1, POLR2F/RPABC2, POLR2H/RPABC3, POLR2K/RPABC4 and POLR2L/RPABC5 and a mobile stalk composed of two subunits POLR2D/RPB4 and POLR2G/RPB7. Part of Pol II(G) complex, in which Pol II core associates with an additional subunit POLR2M; unlike conventional Pol II, Pol II(G) functions as a transcriptional repressor. Part of Pol II pre-initiation complex (PIC), in which Pol II core assembles with Mediator, general transcription factors and other specific initiation factors including GTF2E1, GTF2E2, GTF2F1, GTF2F2, TCEA1, ERCC2, ERCC3, GTF2H2, GTF2H3, GTF2H4, GTF2H5, GTF2A1, GTF2A2, GTF2B and TBP; this large multi-subunit PIC complex mediates DNA unwinding and targets Pol II core to the transcription start site where the first phosphodiester bond forms. Directly interacts with POLR2A. Pol III complex consists of a ten-subunit catalytic core composed of POLR3A/RPC1, POLR3B/RPC2, POLR1C/RPAC1, POLR1D/RPAC2, POLR3K/RPC10, POLR2E/RPABC1, POLR2F/RPABC2, POLR2H/RPABC3, POLR2K/RPABC4 and POLR2L/RPABC5; a mobile stalk composed of two subunits POLR3H/RPC8 and CRCP/RPC9, protruding from the core and functioning primarily in transcription initiation; and additional subunits homologous to general transcription factors of the RNA polymerase II machinery, POLR3C/RPC3-POLR3F/RPC6-POLR3G/RPC7 heterotrimer required for transcription initiation and POLR3D/RPC4-POLR3E/RPC5 heterodimer involved in both transcription initiation and termination.

It is found in the nucleus. The protein resides in the nucleolus. Its function is as follows. DNA-dependent RNA polymerase catalyzes the transcription of DNA into RNA using the four ribonucleoside triphosphates as substrates. Common component of RNA polymerases I, II and III which synthesize ribosomal RNA precursors, mRNA precursors and many functional non-coding RNAs, and small RNAs, such as 5S rRNA and tRNAs, respectively. This chain is DNA-directed RNA polymerases I, II, and III subunit RPABC3 (POLR2H), found in Bos taurus (Bovine).